Consider the following 461-residue polypeptide: Putative ankyrin repeat protein FPV218 (461 aa).

12 ANK repeats span residues 1-28 (MLSL…HPDS), 31-61 (KGFY…NPNN), 65-94 (ETVS…DTSL), 96-116 (PLYV…DVNV), 120-149 (ESRS…NVNV), 153-182 (KGLS…RVNI), 186-213 (LGRL…PIDI), 217-248 (NGST…ALDN), 250-277 (CNSP…DITI), 281-312 (CGNT…LMRE), 358-385 (NGPT…NVQY), and 431-460 (LPYE…LKNK).

This is Putative ankyrin repeat protein FPV218 from Fowlpox virus (strain NVSL) (FPV).